A 241-amino-acid chain; its full sequence is 1-(5-phosphoribosyl)-5-[(5-phosphoribosylamino)methylideneamino] imidazole-4-carboxamide isomerase (241 aa).

Aspartate 8 serves as the catalytic Proton acceptor. The Proton donor role is filled by aspartate 127.

It belongs to the HisA/HisF family.

The protein resides in the cytoplasm. The catalysed reaction is 1-(5-phospho-beta-D-ribosyl)-5-[(5-phospho-beta-D-ribosylamino)methylideneamino]imidazole-4-carboxamide = 5-[(5-phospho-1-deoxy-D-ribulos-1-ylimino)methylamino]-1-(5-phospho-beta-D-ribosyl)imidazole-4-carboxamide. It participates in amino-acid biosynthesis; L-histidine biosynthesis; L-histidine from 5-phospho-alpha-D-ribose 1-diphosphate: step 4/9. This chain is 1-(5-phosphoribosyl)-5-[(5-phosphoribosylamino)methylideneamino] imidazole-4-carboxamide isomerase, found in Thermotoga petrophila (strain ATCC BAA-488 / DSM 13995 / JCM 10881 / RKU-1).